The chain runs to 510 residues: uncharacterized protein (510 aa).

This sequence belongs to the phage portal family. PBSX subfamily.

This is an uncharacterized protein from Bacillus subtilis (strain 168).